We begin with the raw amino-acid sequence, 487 residues long: MIILLLSIIIFILYIVKIFKNKSCCGNEIILPPGPISLPFIGNLHQLAIDPHLAIQKLMFKYGNVMTVYFANIKTVVISDPNYLKEVFVNQSHKTSDRYLMGTSRIIGNEKDILFSNGQYWKNYRQILAQSFLKLRDHKGITEKISLESVKLSQAFEWYATSGQVVNPCSLFKMYTLNVIMQLLYSHRSSYDLKGQHPIIDALKMVEESLAVGNVLDLFPILNIFLKKNKLKLVNNLQQVWSYSQDSIKEHREKLLINPEKIDDLLDLFINEIKLSKNSEFFDDEGLYRVCSDLLLSGTETSSSTMSWLLLFLINNPNFQDKVRTELLEATGGKKTIGLTEKSKTPFFNACIKEALRIRPVGALSLPRIASEDVTCGPYTIEKGSQIIMNVYGLAMDPTVWEDPETFNPYRWLSSDISQSTYSFIPFGCGSRVCVGSSLARDEIFLGIGNILLNYIFESQNGKPINEKGHFGIALQTVDYNVKLTKI.

Residues methionine 1–asparagine 21 form a helical membrane-spanning segment. A heme-binding site is contributed by cysteine 434.

The protein belongs to the cytochrome P450 family. Requires heme as cofactor.

It is found in the membrane. This is Probable cytochrome P450 516A1 (cyp516A1) from Dictyostelium discoideum (Social amoeba).